A 123-amino-acid polypeptide reads, in one-letter code: Unknown 12C protein (123 aa).

A signal peptide spans 1-17 (MMSALFLVLSVSLLVSG).

Contains 6 disulfide bonds. Expressed in acontia, a specialised envenomation structure laden with batteries of venom-containing nematocysts found only in the superfamily Metridioidea.

It is found in the secreted. The protein resides in the nematocyst. In terms of biological role, cysteine-rich protein with probable toxin activity. The chain is Unknown 12C protein from Calliactis polypus (Hermit crab anemone).